Consider the following 402-residue polypeptide: Putative cytochrome P450 133B1 (402 aa).

Cys-348 serves as a coordination point for heme.

This sequence belongs to the cytochrome P450 family. It depends on heme as a cofactor.

The protein is Putative cytochrome P450 133B1 (cyp133B1) of Xylella fastidiosa (strain 9a5c).